Reading from the N-terminus, the 360-residue chain is ACT1-like protein (360 aa).

Positions 339-360 (KKQSHNNANDHHEDSMNYSITQ) are disordered.

Interacts with the receptor complex composed of ilcr-1 and ilcr-2. Also interacts with pik-1. As to expression, expressed in neurons.

In terms of biological role, may act as an adapter to facilitate downstream signaling for the receptor complex composed of ilcr-1 and ilcr-2, which is a signaling complex that modulates neuronal activity and animal behavior in response to sensory neuron input. The chain is ACT1-like protein from Caenorhabditis elegans.